We begin with the raw amino-acid sequence, 477 residues long: Bifunctional protein HldE (477 aa).

The interval 1 to 318 (MKVTLPEFER…ENAVRGRADT (318 aa)) is ribokinase. Position 179 is an N6-acetyllysine (Lys179). 195 to 198 (NLSE) serves as a coordination point for ATP. Asp264 is an active-site residue. Residues 344–477 (MTNGVFDILH…IKKIQQDKKG (134 aa)) are cytidylyltransferase.

The protein in the N-terminal section; belongs to the carbohydrate kinase PfkB family. It in the C-terminal section; belongs to the cytidylyltransferase family. Homodimer.

It catalyses the reaction D-glycero-beta-D-manno-heptose 7-phosphate + ATP = D-glycero-beta-D-manno-heptose 1,7-bisphosphate + ADP + H(+). The enzyme catalyses D-glycero-beta-D-manno-heptose 1-phosphate + ATP + H(+) = ADP-D-glycero-beta-D-manno-heptose + diphosphate. Its pathway is nucleotide-sugar biosynthesis; ADP-L-glycero-beta-D-manno-heptose biosynthesis; ADP-L-glycero-beta-D-manno-heptose from D-glycero-beta-D-manno-heptose 7-phosphate: step 1/4. It participates in nucleotide-sugar biosynthesis; ADP-L-glycero-beta-D-manno-heptose biosynthesis; ADP-L-glycero-beta-D-manno-heptose from D-glycero-beta-D-manno-heptose 7-phosphate: step 3/4. In terms of biological role, catalyzes the phosphorylation of D-glycero-D-manno-heptose 7-phosphate at the C-1 position to selectively form D-glycero-beta-D-manno-heptose-1,7-bisphosphate. Its function is as follows. Catalyzes the ADP transfer from ATP to D-glycero-beta-D-manno-heptose 1-phosphate, yielding ADP-D-glycero-beta-D-manno-heptose. In Shigella flexneri serotype 5b (strain 8401), this protein is Bifunctional protein HldE.